The sequence spans 322 residues: tRNA U34 carboxymethyltransferase (322 aa).

Carboxy-S-adenosyl-L-methionine-binding positions include K91, W105, K110, G129, 179-180 (LE), M195, Y199, and R314.

Belongs to the class I-like SAM-binding methyltransferase superfamily. CmoB family. In terms of assembly, homotetramer.

It carries out the reaction carboxy-S-adenosyl-L-methionine + 5-hydroxyuridine(34) in tRNA = 5-carboxymethoxyuridine(34) in tRNA + S-adenosyl-L-homocysteine + H(+). Functionally, catalyzes carboxymethyl transfer from carboxy-S-adenosyl-L-methionine (Cx-SAM) to 5-hydroxyuridine (ho5U) to form 5-carboxymethoxyuridine (cmo5U) at position 34 in tRNAs. This chain is tRNA U34 carboxymethyltransferase, found in Pseudomonas paraeruginosa (strain DSM 24068 / PA7) (Pseudomonas aeruginosa (strain PA7)).